A 152-amino-acid polypeptide reads, in one-letter code: Protein D1 (152 aa).

It belongs to the phosphatidylethanolamine-binding protein family.

The chain is Protein D1 (D1) from Onchocerca volvulus.